Here is a 122-residue protein sequence, read N- to C-terminus: Large ribosomal subunit protein uL14 (122 aa).

The protein belongs to the universal ribosomal protein uL14 family. In terms of assembly, part of the 50S ribosomal subunit. Forms a cluster with proteins L3 and L19. In the 70S ribosome, L14 and L19 interact and together make contacts with the 16S rRNA in bridges B5 and B8.

Binds to 23S rRNA. Forms part of two intersubunit bridges in the 70S ribosome. This chain is Large ribosomal subunit protein uL14, found in Idiomarina loihiensis (strain ATCC BAA-735 / DSM 15497 / L2-TR).